Reading from the N-terminus, the 441-residue chain is Protein translocase subunit SecY (441 aa).

The next 10 membrane-spanning stretches (helical) occupy residues 24–44, 77–97, 123–143, 152–172, 181–201, 215–235, 272–292, 313–333, 373–393, and 397–417; these read LFVL…VPGI, ILAL…LLAT, ATVV…PNML, FSFY…LMWL, IGNG…PSAI, PLVL…VVFV, VMPA…TQWF, PLYL…YTAM, LIGG…TSAW, and FYFG…FIVQ.

Belongs to the SecY/SEC61-alpha family. As to quaternary structure, component of the Sec protein translocase complex. Heterotrimer consisting of SecY, SecE and SecG subunits. The heterotrimers can form oligomers, although 1 heterotrimer is thought to be able to translocate proteins. Interacts with the ribosome. Interacts with SecDF, and other proteins may be involved. Interacts with SecA.

It localises to the cell inner membrane. The central subunit of the protein translocation channel SecYEG. Consists of two halves formed by TMs 1-5 and 6-10. These two domains form a lateral gate at the front which open onto the bilayer between TMs 2 and 7, and are clamped together by SecE at the back. The channel is closed by both a pore ring composed of hydrophobic SecY resides and a short helix (helix 2A) on the extracellular side of the membrane which forms a plug. The plug probably moves laterally to allow the channel to open. The ring and the pore may move independently. The polypeptide is Protein translocase subunit SecY (Haemophilus influenzae (strain ATCC 51907 / DSM 11121 / KW20 / Rd)).